We begin with the raw amino-acid sequence, 435 residues long: GTPase Der (435 aa).

2 EngA-type G domains span residues 3-168 and 176-351; these read PTVA…PEDD and VKLT…QNRR. Residues 9–16, 56–60, 120–123, 182–189, 229–233, and 294–297 contribute to the GTP site; these read GRPNVGKS, DTGGY, NKVD, DTAGL, and NKWD. Positions 352–435 constitute a KH-like domain; sequence MKIDTSRLNN…TPIELKFRRK (84 aa).

It belongs to the TRAFAC class TrmE-Era-EngA-EngB-Septin-like GTPase superfamily. EngA (Der) GTPase family. Associates with the 50S ribosomal subunit.

GTPase that plays an essential role in the late steps of ribosome biogenesis. The protein is GTPase Der of Chloroherpeton thalassium (strain ATCC 35110 / GB-78).